The following is a 341-amino-acid chain: Acetylpolyamine amidohydrolase (341 aa).

Residues Y19, E106, and E117 each coordinate substrate. H159 (proton donor/acceptor) is an active-site residue. Zn(2+) is bound by residues D195, H197, and D284. Y323 provides a ligand contact to substrate.

This sequence belongs to the histone deacetylase family. In terms of assembly, homodimer. It depends on Zn(2+) as a cofactor.

The enzyme catalyses N-acetylputrescine + H2O = putrescine + acetate. It catalyses the reaction N-acetylcadaverine + H2O = cadaverine + acetate. It carries out the reaction N(1)-acetylspermine + H2O = spermine + acetate. The catalysed reaction is N(1)-acetylspermidine + H2O = spermidine + acetate. The enzyme catalyses N(8)-acetylspermidine + H2O = spermidine + acetate. It participates in amine and polyamine metabolism. With respect to regulation, zinc ions inhibit enzyme activity in a dose-dependent manner. Inhibited by KCl at concentrations above 10 mM. Inhibited by o-oxyquinoline in vitro, suggesting that it is a metalloprotein. Inhibited by various substrate N(8)-acetylspermidine analogs bearing different metal-binding groups such as trifluoromethylketone, thiol, or hydroxamate, and by hydroxamate analogs of short-chain acetyldiamines. Its function is as follows. Involved in polyamine metabolism. Catalyzes the deacetylation of various acetylated polyamines such as N-acetylputrescine, N-acetylcadaverine, N(1)-acetylspermine, N(1)-acetylspermidine and N(8)-acetylspermidine. In vitro, is also able to deacetylate L-Lys(epsilon-acetyl)coumarin, but has very low activity towards the larger tetrapeptide N-acetyl-L-Arg-L-His-L-Lys(epsilon-acetyl)-L-Lys(epsilon-acetyl)coumarin. The protein is Acetylpolyamine amidohydrolase of Mycoplana ramosa (Mycoplana bullata).